The sequence spans 276 residues: Large ribosomal subunit protein uL2 (276 aa).

Disordered stretches follow at residues 35–55 (APLH…RHQG) and 222–276 (GSVM…RRKK). Residues 258-276 (KTRKKNKHSDKYIVRRRKK) are compositionally biased toward basic residues.

This sequence belongs to the universal ribosomal protein uL2 family. In terms of assembly, part of the 50S ribosomal subunit. Forms a bridge to the 30S subunit in the 70S ribosome.

One of the primary rRNA binding proteins. Required for association of the 30S and 50S subunits to form the 70S ribosome, for tRNA binding and peptide bond formation. It has been suggested to have peptidyltransferase activity; this is somewhat controversial. Makes several contacts with the 16S rRNA in the 70S ribosome. The sequence is that of Large ribosomal subunit protein uL2 from Shouchella clausii (strain KSM-K16) (Alkalihalobacillus clausii).